We begin with the raw amino-acid sequence, 333 residues long: Delta-aminolevulinic acid dehydratase (333 aa).

Zn(2+)-binding residues include Cys127, Cys129, and Cys137. Catalysis depends on Lys204, which acts as the Schiff-base intermediate with substrate. Positions 214 and 226 each coordinate 5-aminolevulinate. Lys257 acts as the Schiff-base intermediate with substrate in catalysis. The 5-aminolevulinate site is built by Ser283 and Tyr322.

The protein belongs to the ALAD family. As to quaternary structure, homooctamer. It depends on Zn(2+) as a cofactor.

The catalysed reaction is 2 5-aminolevulinate = porphobilinogen + 2 H2O + H(+). It participates in porphyrin-containing compound metabolism; protoporphyrin-IX biosynthesis; coproporphyrinogen-III from 5-aminolevulinate: step 1/4. In terms of biological role, catalyzes an early step in the biosynthesis of tetrapyrroles. Binds two molecules of 5-aminolevulinate per subunit, each at a distinct site, and catalyzes their condensation to form porphobilinogen. The chain is Delta-aminolevulinic acid dehydratase (alad) from Dictyostelium discoideum (Social amoeba).